Consider the following 701-residue polypeptide: Kinesin-like protein KIN-10C (701 aa).

Positions 8–318 constitute a Kinesin motor domain; that stretch reads VVRVVARVKP…LNLASRICLG (311 aa). 94–101 is an ATP binding site; that stretch reads GARNSGKT.

This sequence belongs to the TRAFAC class myosin-kinesin ATPase superfamily. Kinesin family. KIN-10 subfamily.

The sequence is that of Kinesin-like protein KIN-10C from Arabidopsis thaliana (Mouse-ear cress).